Consider the following 217-residue polypeptide: Ras-related protein Rab-19 (217 aa).

Residues S26, V28, G29, K30, T31, C32, Y42, S43, E44, S45, and T49 each coordinate GTP. T31 lines the Mg(2+) pocket. Residues 39 to 54 (SGVYSESQQNTIGVDF) carry the Switch 1 motif. Positions 49 and 72 each coordinate Mg(2+). The short motif at 74–89 (AGQERFRTITQSYYRS) is the Switch 2 element. Residues G75, N130, K131, D133, S161, A162, and K163 each contribute to the GTP site. S-geranylgeranyl cysteine attachment occurs at residues C215 and C217. Cysteine methyl ester is present on C217.

Belongs to the small GTPase superfamily. Rab family. Mg(2+) serves as cofactor.

Its subcellular location is the cell membrane. The enzyme catalyses GTP + H2O = GDP + phosphate + H(+). With respect to regulation, regulated by guanine nucleotide exchange factors (GEFs) which promote the exchange of bound GDP for free GTP. Regulated by GTPase activating proteins (GAPs) which increase the GTP hydrolysis activity. Inhibited by GDP dissociation inhibitors (GDIs). Functionally, the small GTPases Rab are key regulators of intracellular membrane trafficking, from the formation of transport vesicles to their fusion with membranes. Rabs cycle between an inactive GDP-bound form and an active GTP-bound form that is able to recruit to membranes different set of downstream effectors directly responsible for vesicle formation, movement, tethering and fusion. The sequence is that of Ras-related protein Rab-19 from Rattus norvegicus (Rat).